Here is a 1193-residue protein sequence, read N- to C-terminus: Falcilysin (1193 aa).

Residue H129 coordinates Zn(2+). The Proton acceptor role is filled by E132. H133 and E243 together coordinate Zn(2+). The tract at residues 376–404 (DKTNNHNNNHSNNQSSENNGYSNGSHSSD) is disordered. Over residues 380–394 (NHNNNHSNNQSSENN) the composition is skewed to low complexity. Residues 395-404 (GYSNGSHSSD) are compositionally biased toward polar residues. A coiled-coil region spans residues 583–619 (LLEGDENYAQEQENLEKQELKKRIENFNEQEKEQVIK).

It belongs to the peptidase M16 family. In terms of assembly, monomer. Component of the hemozoin formation complex (HFC) composed of falcipains FP2A and/or FP2B, plasmepsins PMII, PMIII/HAP and PMIV, heme detoxifying protein HDP and falcilysin FLN. The HFC complex is involved in hemoglobin degradation and detoxification of heme in the food vacuole during the asexual blood stage. Requires Zn(2+) as cofactor. Does not require processing for targeting to the food vacuole or maturation.

It localises to the vacuole membrane. It is found in the plastid. Its subcellular location is the apicoplast. The protein localises to the vesicle. In terms of biological role, in the food vacuole, acts downstream of proteases plasmepsins PMI and PMII and falcipains during the catabolism of host hemoglobin by cleaving peptide fragments of alpha and beta hemoglobin subunits generated by PMI and PMII and falcipains. In the apicoplast, degrades apicoplast transit peptides after their cleavage. Prefers bulky hydrophobic amino acids in the P1' position at both acidic and neutral pH. At P2', prefers hydrophobic residues at acidic pH; at neutral pH, these same residues are abundant but prefers Arg. At P3', prefers hydrophobic residues, especially Met, at both pH conditions. At P4' and P5', prefers acidic residues at acidic pH, however, at neutral pH, the enzyme is less selective at these positions. The optimal site cleavage at acidic pH is YNEHS-|-FFMEE and, at neutral pH, MKRHS-|-FRMRG. This Plasmodium falciparum (isolate 3D7) protein is Falcilysin.